A 367-amino-acid chain; its full sequence is Queuine tRNA-ribosyltransferase (367 aa).

The active-site Proton acceptor is the Asp-92. Residues 92–96, Asp-146, Gln-188, and Gly-215 each bind substrate; that span reads DSGGF. The interval 246-252 is RNA binding; the sequence is GVGTPKD. Residue Asp-265 is the Nucleophile of the active site. Zn(2+)-binding residues include Cys-303, Cys-305, Cys-308, and His-334.

The protein belongs to the queuine tRNA-ribosyltransferase family. Homodimer. Within each dimer, one monomer is responsible for RNA recognition and catalysis, while the other monomer binds to the replacement base PreQ1. The cofactor is Zn(2+).

The catalysed reaction is 7-aminomethyl-7-carbaguanine + guanosine(34) in tRNA = 7-aminomethyl-7-carbaguanosine(34) in tRNA + guanine. Its pathway is tRNA modification; tRNA-queuosine biosynthesis. In terms of biological role, catalyzes the base-exchange of a guanine (G) residue with the queuine precursor 7-aminomethyl-7-deazaguanine (PreQ1) at position 34 (anticodon wobble position) in tRNAs with GU(N) anticodons (tRNA-Asp, -Asn, -His and -Tyr). Catalysis occurs through a double-displacement mechanism. The nucleophile active site attacks the C1' of nucleotide 34 to detach the guanine base from the RNA, forming a covalent enzyme-RNA intermediate. The proton acceptor active site deprotonates the incoming PreQ1, allowing a nucleophilic attack on the C1' of the ribose to form the product. After dissociation, two additional enzymatic reactions on the tRNA convert PreQ1 to queuine (Q), resulting in the hypermodified nucleoside queuosine (7-(((4,5-cis-dihydroxy-2-cyclopenten-1-yl)amino)methyl)-7-deazaguanosine). This chain is Queuine tRNA-ribosyltransferase, found in Francisella tularensis subsp. tularensis (strain FSC 198).